A 305-amino-acid polypeptide reads, in one-letter code: Olfactory receptor 5M11 (305 aa).

Topologically, residues 1–25 are extracellular; that stretch reads MSNTNGSAITEFILLGLTDCPELQS. Residue N5 is glycosylated (N-linked (GlcNAc...) asparagine). A helical membrane pass occupies residues 26–46; sequence LLFVLFLVVYLVTLLGNLGMI. Over 47–54 the chain is Cytoplasmic; sequence MLMRLDSR. The chain crosses the membrane as a helical span at residues 55–75; that stretch reads LHTPMYFFLTNLAFVDLCYTS. The Extracellular portion of the chain corresponds to 76 to 98; sequence NATPQMSTNIVSEKTISFAGCFT. Cysteines 96 and 188 form a disulfide. A helical membrane pass occupies residues 99 to 119; that stretch reads QCYIFIALLLTEFYMLAAMAY. Over 120-138 the chain is Cytoplasmic; the sequence is DRYVAIYDPLRYSVKTSRR. A helical membrane pass occupies residues 139 to 159; that stretch reads VCICLATFPYVYGFSDGLFQA. Residues 160–195 are Extracellular-facing; sequence ILTFRLTFCRSSVINHFYCADPPLIKLSCSDTYVKE. A helical membrane pass occupies residues 196 to 216; that stretch reads HAMFISAGFNLSSSLTIVLVS. Topologically, residues 217–236 are cytoplasmic; that stretch reads YAFILAAILRIKSAEGRHKA. The helical transmembrane segment at 237 to 257 threads the bilayer; it reads FSTCGSHMMAVTLFYGTLFCM. Residues 258 to 270 lie on the Extracellular side of the membrane; that stretch reads YIRPPTDKTVEES. The helical transmembrane segment at 271-291 threads the bilayer; it reads KIIAVFYTFVSPVLNPLIYSL. Residues 292 to 305 are Cytoplasmic-facing; the sequence is RNKDVKQALKNVLR.

It belongs to the G-protein coupled receptor 1 family.

It is found in the cell membrane. Functionally, odorant receptor. This Homo sapiens (Human) protein is Olfactory receptor 5M11 (OR5M11).